A 363-amino-acid chain; its full sequence is G kinase-anchoring protein 1-B (363 aa).

2 disordered regions span residues 17–79 and 147–182; these read ALLK…RNLA and VNGD…VPLK. Residues 50-79 adopt a coiled-coil conformation; it reads KTNVNEKKKEKRRKKKEQQQSEANELRNLA. The segment covering 160 to 170 has biased composition (basic residues); sequence KVNKKDKRKNN. Coiled coils occupy residues 249–298 and 328–348; these read DGKT…QEGE and AALE…VRYQ.

This sequence belongs to the GKAP1 family.

It is found in the golgi apparatus. Its function is as follows. May play a role in the regulation of insulin-dependent IRS1 tyrosine phosphorylation in adipocytes. In Xenopus laevis (African clawed frog), this protein is G kinase-anchoring protein 1-B (gkap1-b).